Here is a 760-residue protein sequence, read N- to C-terminus: Catecholate siderophore receptor Fiu (760 aa).

A signal peptide spans 1-31; it reads MENNRNFPARQFHSLTFFAGLCIGITPVAQA. A TBDR plug domain is found at 67–175; sequence PVADTTRTMT…PTGSINMISK (109 aa). The TBDR beta-barrel domain maps to 180-760; sequence DSGIDASASI…TFLLTANMHF (581 aa). A TonB C-terminal box motif is present at residues 743–760; it reads RYHPGEPRTFLLTANMHF.

This sequence belongs to the TonB-dependent receptor family.

It localises to the cell outer membrane. Functionally, involved in the active transport across the outer membrane of iron complexed with catecholate siderophores such as dihydroxybenzoylserine and dihydroxybenzoate. It derives its energy for transport by interacting with the trans-periplasmic membrane protein TonB. Can also transport catechol-substituted cephalosporins. Receptor for microcins M, H47 and E492. This chain is Catecholate siderophore receptor Fiu (fiu), found in Escherichia coli (strain UTI89 / UPEC).